Consider the following 275-residue polypeptide: Phosphate import ATP-binding protein PstB 1 (275 aa).

One can recognise an ABC transporter domain in the interval 22–261 (FNVEGVKVYY…SPTEQMFNSP (240 aa)). 54 to 61 (GPSGCGKS) contacts ATP.

It belongs to the ABC transporter superfamily. Phosphate importer (TC 3.A.1.7) family. The complex is composed of two ATP-binding proteins (PstB), two transmembrane proteins (PstC and PstA) and a solute-binding protein (PstS).

It is found in the cell inner membrane. It catalyses the reaction phosphate(out) + ATP + H2O = ADP + 2 phosphate(in) + H(+). Its function is as follows. Part of the ABC transporter complex PstSACB involved in phosphate import. Responsible for energy coupling to the transport system. The sequence is that of Phosphate import ATP-binding protein PstB 1 from Trichormus variabilis (strain ATCC 29413 / PCC 7937) (Anabaena variabilis).